Consider the following 1592-residue polypeptide: Laminin subunit gamma-1 (1592 aa).

The first 19 residues, 1–19, serve as a signal peptide directing secretion; it reads MRAPVLAVLAVLLLGTVRA. The 240-residue stretch at 29-268 folds into the Laminin N-terminal domain; that stretch reads SPQRCMPEFV…AISDFAVGGR (240 aa). N-linked (GlcNAc...) asparagine glycans are attached at residues Asn43 and Asn117. Intrachain disulfides connect Cys269–Cys278, Cys271–Cys288, Cys290–Cys299, Cys302–Cys322, Cys325–Cys334, Cys327–Cys350, Cys353–Cys362, Cys365–Cys378, Cys381–Cys393, Cys383–Cys399, Cys401–Cys410, Cys413–Cys425, Cys428–Cys439, Cys430–Cys446, Cys448–Cys457, and Cys460–Cys475. Laminin EGF-like domains follow at residues 269-324, 325-380, 381-427, and 428-477; these read CKCN…ECLP, CNCN…PCHA, CQCN…GCRP, and CACN…GCTP. One can recognise a Laminin IV type A domain in the interval 504–672; that stretch reads SGVEGWTAQQ…AGPSAPWVEI (169 aa). 2 N-linked (GlcNAc...) asparagine glycosylation sites follow: Asn559 and Asn633. Intrachain disulfides connect Cys707/Cys716, Cys709/Cys723, Cys725/Cys734, Cys737/Cys753, Cys756/Cys764, Cys758/Cys775, Cys778/Cys787, Cys790/Cys808, Cys811/Cys825, Cys813/Cys832, Cys835/Cys844, Cys847/Cys864, Cys867/Cys881, Cys869/Cys888, Cys890/Cys899, Cys902/Cys915, Cys918/Cys930, Cys920/Cys937, Cys939/Cys948, Cys951/Cys963, Cys966/Cys978, Cys968/Cys984, Cys986/Cys995, and Cys998/Cys1011. 6 Laminin EGF-like domains span residues 707–755, 756–810, 811–866, 867–917, 918–965, and 966–1013; these read CTCN…DCQP, CPCP…PCRI, CECS…KCRA, CSCN…GCER, CDCH…GCKP, and CDCD…GCQE. Residues Asn1005, Asn1041, Asn1048, Asn1090, Asn1144, Asn1158, Asn1188, Asn1206, Asn1253, Asn1363, and Asn1386 are each glycosylated (N-linked (GlcNAc...) asparagine). Residues 1013 to 1592 form a domain II and I region; that stretch reads ECPACYRLVK…CYNTPIIEKP (580 aa). Residues 1018–1477 adopt a coiled-coil conformation; it reads YRLVKDKVNE…DEKMAEMASN (460 aa). A compositionally biased stretch (basic and acidic residues) spans 1456 to 1472; it reads NQLKKKQAEAESDEKMA. The tract at residues 1456–1489 is disordered; it reads NQLKKKQAEAESDEKMAEMASNATKDAESNANNS. Polar residues predominate over residues 1476–1489; sequence SNATKDAESNANNS. Asn1477 and Asn1487 each carry an N-linked (GlcNAc...) asparagine glycan. The stretch at 1515–1579 forms a coiled coil; that stretch reads VGQLTVLEKT…ANLEDIKNTL (65 aa).

Laminin is a complex glycoprotein, consisting of three different polypeptide chains (alpha, beta, gamma), which are bound to each other by disulfide bonds into a cross-shaped molecule comprising one long and three short arms with globules at each end.

It is found in the secreted. Its subcellular location is the extracellular space. It localises to the extracellular matrix. The protein localises to the basement membrane. Functionally, binding to cells via a high affinity receptor, laminin is thought to mediate the attachment, migration and organization of cells into tissues during embryonic development by interacting with other extracellular matrix components. The polypeptide is Laminin subunit gamma-1 (lamc1) (Xenopus tropicalis (Western clawed frog)).